Consider the following 307-residue polypeptide: Homoserine kinase (307 aa).

An ATP-binding site is contributed by 86-96 (PIARGLGSSAA).

Belongs to the GHMP kinase family. Homoserine kinase subfamily.

It is found in the cytoplasm. It catalyses the reaction L-homoserine + ATP = O-phospho-L-homoserine + ADP + H(+). It functions in the pathway amino-acid biosynthesis; L-threonine biosynthesis; L-threonine from L-aspartate: step 4/5. Functionally, catalyzes the ATP-dependent phosphorylation of L-homoserine to L-homoserine phosphate. The chain is Homoserine kinase from Petrotoga mobilis (strain DSM 10674 / SJ95).